We begin with the raw amino-acid sequence, 259 residues long: MTDLKASSLRALKLMDLTTLNDDDTDEKVIALCHQAKTPVGNTAAICIYPRFIPIARKTLKEQGTPEIRIATVTNFPHGNDDIEIALAETRAAIAYGADEVDVVFPYRALMAGDEQVGFDLVKACKEACAAANVLLKVIIETGELKDEALIRKASEISIKAGADFIKTSTGKVAVNATPESARIMMEVIRDMGVEKTVGFKPAGGVRTAEDAQKYLAIADELFGADWADARHYRFGASSLLASLLKALGHGDGKSASSY.

D102 acts as the Proton donor/acceptor in catalysis. Catalysis depends on K167, which acts as the Schiff-base intermediate with acetaldehyde. K201 acts as the Proton donor/acceptor in catalysis.

This sequence belongs to the DeoC/FbaB aldolase family. DeoC type 2 subfamily.

It is found in the cytoplasm. The enzyme catalyses 2-deoxy-D-ribose 5-phosphate = D-glyceraldehyde 3-phosphate + acetaldehyde. Its pathway is carbohydrate degradation; 2-deoxy-D-ribose 1-phosphate degradation; D-glyceraldehyde 3-phosphate and acetaldehyde from 2-deoxy-alpha-D-ribose 1-phosphate: step 2/2. In terms of biological role, catalyzes a reversible aldol reaction between acetaldehyde and D-glyceraldehyde 3-phosphate to generate 2-deoxy-D-ribose 5-phosphate. This is Deoxyribose-phosphate aldolase from Shigella flexneri.